Consider the following 362-residue polypeptide: Leucoanthocyanidin dioxygenase (362 aa).

The disordered stretch occupies residues 1-23; it reads MVTSAMGPSPRVEELARSGLDTI. The region spanning 214–313 is the Fe2OG dioxygenase domain; sequence LIVQMKINFY…RISWAVFCEP (100 aa). Residues histidine 238, aspartate 240, and histidine 294 each coordinate Fe cation. The active site involves arginine 304.

This sequence belongs to the iron/ascorbate-dependent oxidoreductase family. It depends on Fe cation as a cofactor. Requires L-ascorbate as cofactor. Expressed in red but not in green forma of P.frutescens. In red forma, it is predominantly expressed in stems and leaves, but not in roots.

It carries out the reaction a (2R,3S,4S)-leucoanthocyanidin + 2-oxoglutarate + O2 = a 4-H-anthocyanidin with a 3-hydroxy group + succinate + CO2 + 2 H2O. It participates in pigment biosynthesis; anthocyanin biosynthesis. Its function is as follows. Oxidation of leucoanthocyanidins into anthocyanidins. The polypeptide is Leucoanthocyanidin dioxygenase (ANS) (Perilla frutescens (Beefsteak mint)).